The following is a 280-amino-acid chain: Undecaprenyl-diphosphatase (280 aa).

8 helical membrane passes run 1-21 (MTIL…FLPV), 41-61 (FVRA…LVLY), 87-107 (FDLY…GFLF), 115-135 (LGSV…MLFV), 147-167 (ITYP…FLPG), 186-206 (KAAA…ATLL), 225-245 (IVLL…IKFF), and 260-280 (YRIL…SLAV).

Belongs to the UppP family.

The protein resides in the cell inner membrane. It carries out the reaction di-trans,octa-cis-undecaprenyl diphosphate + H2O = di-trans,octa-cis-undecaprenyl phosphate + phosphate + H(+). Its function is as follows. Catalyzes the dephosphorylation of undecaprenyl diphosphate (UPP). Confers resistance to bacitracin. The protein is Undecaprenyl-diphosphatase of Porphyromonas gingivalis (strain ATCC 33277 / DSM 20709 / CIP 103683 / JCM 12257 / NCTC 11834 / 2561).